The following is a 352-amino-acid chain: MASFGYFLFLCGLSQALSSYPIWWSLAIGHQYSSLGTQPILCGSIPGLVPKQLRFCRNYVEIMPSVAEGVKIGIQECQHQFRGRRWNCTTVNDSLAIFGPVLDKATRESAFVHAIASAGVAFAVTRSCAEGSATICGCDTRHKGSPGEGWKWGGCSEDVEFGSMVSREFADARENRPDARSAMNRHNNEAGRTSIIELMHLKCKCHGLSGSCEVKTCWWSQPDFRVIGDYLKDKYDSASEMVVEKHRESRGWVETLRPKYNFFKAPTEKDLVYYENSPNFCEPNPETGSFGTRDRICNVTSHGIDGCDLLCCGRGHNTRTEKRKEKCHCIFHWCCYVRCQECIRVYDVHTCK.

A signal peptide spans 1–18; the sequence is MASFGYFLFLCGLSQALS. An intrachain disulfide couples cysteine 77 to cysteine 88. 2 N-linked (GlcNAc...) asparagine glycosylation sites follow: asparagine 87 and asparagine 92. 10 disulfide bridges follow: cysteine 128-cysteine 136, cysteine 138-cysteine 155, cysteine 203-cysteine 217, cysteine 205-cysteine 212, cysteine 281-cysteine 312, cysteine 297-cysteine 307, cysteine 311-cysteine 351, cysteine 327-cysteine 342, cysteine 329-cysteine 339, and cysteine 334-cysteine 335. The O-palmitoleoyl serine; by PORCN moiety is linked to residue serine 209. An N-linked (GlcNAc...) asparagine glycan is attached at asparagine 298.

This sequence belongs to the Wnt family. In terms of processing, palmitoleoylation is required for efficient binding to frizzled receptors. Depalmitoleoylation leads to inhibit the Wnt signaling pathway. Disulfide bonds have critical and distinct roles in secretion and activity. Loss of each conserved cysteine in WNT3A results in high molecular weight oxidized Wnt oligomers, which are formed through inter-Wnt disulfide bonding. In terms of tissue distribution, expressed in cornea. Isoform 1 is expressed in the primitive streak, dorsal neural tube, proximal otic vesicle, the apical ectodermal ridge and the epithelium of feather buds.

It is found in the secreted. The protein resides in the extracellular space. The protein localises to the extracellular matrix. Its subcellular location is the cytoplasm. Ligand for members of the frizzled family of seven transmembrane receptors. Functions in the canonical Wnt signaling pathway that results in activation of transcription factors of the TCF/LEF family. Regulates chick apical ectodermal ridge formation. Required for normal embryonic mesoderm development and formation of caudal somites. Required for normal morphogenesis of the developing neural tube. The chain is Protein Wnt-3a (WNT3A) from Gallus gallus (Chicken).